A 509-amino-acid chain; its full sequence is ATP synthase subunit alpha (509 aa).

Residue Gly169–Thr176 participates in ATP binding.

This sequence belongs to the ATPase alpha/beta chains family. In terms of assembly, F-type ATPases have 2 components, CF(1) - the catalytic core - and CF(0) - the membrane proton channel. CF(1) has five subunits: alpha(3), beta(3), gamma(1), delta(1), epsilon(1). CF(0) has three main subunits: a(1), b(2) and c(9-12). The alpha and beta chains form an alternating ring which encloses part of the gamma chain. CF(1) is attached to CF(0) by a central stalk formed by the gamma and epsilon chains, while a peripheral stalk is formed by the delta and b chains.

The protein resides in the cell inner membrane. It catalyses the reaction ATP + H2O + 4 H(+)(in) = ADP + phosphate + 5 H(+)(out). Produces ATP from ADP in the presence of a proton gradient across the membrane. The alpha chain is a regulatory subunit. The polypeptide is ATP synthase subunit alpha (Methylobacterium sp. (strain 4-46)).